The following is a 426-amino-acid chain: 3-isopropylmalate dehydratase large subunit (426 aa).

[4Fe-4S] cluster is bound by residues C307, C367, and C370.

Belongs to the aconitase/IPM isomerase family. LeuC type 2 subfamily. Heterodimer of LeuC and LeuD. It depends on [4Fe-4S] cluster as a cofactor.

The enzyme catalyses (2R,3S)-3-isopropylmalate = (2S)-2-isopropylmalate. It functions in the pathway amino-acid biosynthesis; L-leucine biosynthesis; L-leucine from 3-methyl-2-oxobutanoate: step 2/4. Its function is as follows. Catalyzes the isomerization between 2-isopropylmalate and 3-isopropylmalate, via the formation of 2-isopropylmaleate. This chain is 3-isopropylmalate dehydratase large subunit, found in Aliarcobacter butzleri (strain RM4018) (Arcobacter butzleri).